Here is a 477-residue protein sequence, read N- to C-terminus: Adenosylhomocysteinase (477 aa).

Thr63, Asp142, and Glu202 together coordinate substrate. Residue 203–205 coordinates NAD(+); that stretch reads TTT. 2 residues coordinate substrate: Lys232 and Asp236. Residues Asn237, 266–271, Glu289, Asn324, 345–347, and Asn390 each bind NAD(+); these read GYGDVG and IGH.

This sequence belongs to the adenosylhomocysteinase family. The cofactor is NAD(+).

It localises to the cytoplasm. The enzyme catalyses S-adenosyl-L-homocysteine + H2O = L-homocysteine + adenosine. The protein operates within amino-acid biosynthesis; L-homocysteine biosynthesis; L-homocysteine from S-adenosyl-L-homocysteine: step 1/1. Its function is as follows. May play a key role in the regulation of the intracellular concentration of adenosylhomocysteine. The polypeptide is Adenosylhomocysteinase (Leptothrix cholodnii (strain ATCC 51168 / LMG 8142 / SP-6) (Leptothrix discophora (strain SP-6))).